The sequence spans 653 residues: Hepatocyte growth factor activator serine protease (653 aa).

The signal sequence occupies residues 1–34 (MGRQAWISSLCPLPRPCPFLLLLLLLVVPRGAQP). Residues 34–98 (PQAGRNHTEP…SSSPPGGQVL (65 aa)) are disordered. A propeptide spans 35 to 369 (QAGRNHTEPP…RLTACESLAR (335 aa)) (removed in mature form). Residues N39, N47, and N63 are each glycosylated (N-linked (GlcNAc...) asparagine). Over residues 47–59 (NVTATPVTPTIPV) the composition is skewed to low complexity. Positions 100-147 (ESGQPCRFPFRYGGRMLHSCTSEGSAYRKWCATTHNYDRDRAWGYCAE) constitute a Fibronectin type-II domain. Cystine bridges form between C105/C130, C119/C145, C161/C172, C166/C183, C185/C194, C199/C227, C225/C234, C242/C253, C247/C264, C266/C275, C283/C364, C304/C346, C335/C359, C392/C519, C430/C446, C438/C508, C533/C602, C565/C581, and C592/C620. Residues 157–195 (ILDPCASGPCLNGGTCSSTHDHGSYHCSCPLAFTGKDCG) form the EGF-like 1 domain. Residues 197 to 237 (EKCFDETRYEYFEVGDHWARVSEGHVEQCGCMEGQARCEDT) form the Fibronectin type-I domain. The 39-residue stretch at 238–276 (HHTACLSSPCLNGGTCHLIVGTGTSVCTCPLGYAGRFCN) folds into the EGF-like 2 domain. Positions 283-364 (CFLGNGTEYR…SWEYCRLTAC (82 aa)) constitute a Kringle domain. Residue N287 is glycosylated (N-linked (GlcNAc...) asparagine). The 239-residue stretch at 406-644 (IIGGSSSLPG…YVDWINDRIR (239 aa)) folds into the Peptidase S1 domain. Catalysis depends on H445, which acts as the Charge relay system. A glycan (N-linked (GlcNAc...) asparagine) is linked at N466. D495 serves as the catalytic Charge relay system. N-linked (GlcNAc...) asparagine glycosylation is present at N544. S596 functions as the Charge relay system in the catalytic mechanism.

Belongs to the peptidase S1 family. In terms of assembly, heterodimer of a short chain and a long chain linked by a disulfide bond. The active form of HGFAC presents in the serum is derived from the COOH-terminal region of the precursor by the cleavage of bonds between Arg-369 and Val-370 and Arg-405 and Ile-406.

The protein localises to the secreted. In terms of biological role, serine protease that hydrolyzes the inactive zymogen hepatocyte growth factor (HGFsc) to an activated disulfide-linked heterodimer, then initiating hepatocyte growth factor receptor signaling pathway. The sequence is that of Hepatocyte growth factor activator serine protease from Mus musculus (Mouse).